The sequence spans 298 residues: Succinate dehydrogenase [ubiquinone] iron-sulfur subunit, mitochondrial (298 aa).

In terms of domain architecture, 2Fe-2S ferredoxin-type spans Y59 to M147. C107, C112, C115, and C127 together coordinate [2Fe-2S] cluster. The 4Fe-4S ferredoxin-type domain occupies E190–Y220. [4Fe-4S] cluster is bound by residues C200, C203, and C206. C210 contributes to the [3Fe-4S] cluster binding site. W215 provides a ligand contact to a ubiquinone. The [3Fe-4S] cluster site is built by C257 and C263. Residue C267 coordinates [4Fe-4S] cluster.

It belongs to the succinate dehydrogenase/fumarate reductase iron-sulfur protein family. As to quaternary structure, component of complex II composed of four subunits: a flavoprotein (FP), an iron-sulfur protein (IP), and a cytochrome b composed of a large and a small subunit. It depends on [2Fe-2S] cluster as a cofactor. [3Fe-4S] cluster is required as a cofactor. Requires [4Fe-4S] cluster as cofactor.

It localises to the mitochondrion inner membrane. The catalysed reaction is a quinone + succinate = fumarate + a quinol. Its pathway is carbohydrate metabolism; tricarboxylic acid cycle; fumarate from succinate (eukaryal route): step 1/1. Functionally, iron-sulfur protein (IP) subunit of succinate dehydrogenase (SDH) that is involved in complex II of the mitochondrial electron transport chain and is responsible for transferring electrons from succinate to ubiquinone (coenzyme Q). This chain is Succinate dehydrogenase [ubiquinone] iron-sulfur subunit, mitochondrial (sdhb-1), found in Caenorhabditis elegans.